Here is a 32-residue protein sequence, read N- to C-terminus: Cytochrome b6-f complex subunit 7 (32 aa).

Residues alanine 9–leucine 27 traverse the membrane as a helical segment.

This sequence belongs to the PetM family. As to quaternary structure, the 4 large subunits of the cytochrome b6-f complex are cytochrome b6, subunit IV (17 kDa polypeptide, PetD), cytochrome f and the Rieske protein, while the 4 small subunits are PetG, PetL, PetM and PetN. The complex functions as a dimer.

Its subcellular location is the cellular thylakoid membrane. Functionally, component of the cytochrome b6-f complex, which mediates electron transfer between photosystem II (PSII) and photosystem I (PSI), cyclic electron flow around PSI, and state transitions. The sequence is that of Cytochrome b6-f complex subunit 7 from Prochlorococcus marinus (strain MIT 9301).